The primary structure comprises 485 residues: Adenosylhomocysteinase 1 (485 aa).

Substrate-binding residues include T64, D139, and E205. 206 to 208 (TTT) contacts NAD(+). Residues K235 and D239 each coordinate substrate. Residues 271 to 276 (GDVGKG), E292, 348 to 350 (IGH), N397, H404, K479, 479 to 483 (KPPHY), and Y483 contribute to the NAD(+) site.

This sequence belongs to the adenosylhomocysteinase family. Homotetramer. The cofactor is NAD(+).

The catalysed reaction is S-adenosyl-L-homocysteine + H2O = L-homocysteine + adenosine. Its pathway is amino-acid biosynthesis; L-homocysteine biosynthesis; L-homocysteine from S-adenosyl-L-homocysteine: step 1/1. Its function is as follows. Essential protein during embryogenesis. Adenosylhomocysteine is a competitive inhibitor of S-adenosyl-L-methionine-dependent methyl transferase reactions; therefore adenosylhomocysteinase may play a key role in the control of methylations via regulation of the intracellular concentration of adenosylhomocysteine. Required for DNA methylation-dependent gene silencing. This chain is Adenosylhomocysteinase 1, found in Arabidopsis thaliana (Mouse-ear cress).